A 1029-amino-acid polypeptide reads, in one-letter code: Toll-like receptor 9 (1029 aa).

An N-terminal signal peptide occupies residues 1–24 (MGPYCAPHPLSLLVQAAALAAALA). Over 25–815 (EGTLPAFLPC…LCLDETLSLD (791 aa)) the chain is Extracellular. A disulfide bridge connects residues cysteine 34 and cysteine 44. A DNA-binding site is contributed by 46 to 50 (WLFLK). 26 LRR repeats span residues 61–84 (RANV…DFVH), 86–109 (SNLR…HFPC), 121–146 (VPTL…SLVS), 149–165 (LSHT…FTGL), 166–189 (HALR…ALEV), 197–220 (LGNL…LPPS), 222–241 (DTLL…DLAN), 242–267 (LTAL…CREC), 282–305 (LSRL…WFRG), 307–331 (GRLQ…IFND), 332–355 (LTQL…HLHL), 362–385 (LVSL…TLQS), 389–412 (LPKL…IFGA), 414–439 (PSLL…LGEV), 469–492 (CNLN…MFTR), 494–517 (SRLQ…QFVP), 518–541 (LTSL…SFTE), 543–570 (PQLE…SFVA), 572–596 (LPSL…LSSA), 598–620 (LRAL…LYLC), 625–648 (LRNL…HLDN), 650–673 (PKSL…SLTV), 674–697 (LPRL…SLPP), 699–721 (IRLQ…FFVR), 722–745 (ATRL…WFGS), and 747–770 (AGTL…AFVD). An N-linked (GlcNAc...) asparagine glycan is attached at asparagine 63. DNA-binding positions include 71–76 (SNRIHH) and 94–108 (KWNC…MHFP). Cysteine 97 and cysteine 109 are oxidised to a cystine. Asparagine 128 carries an N-linked (GlcNAc...) asparagine glycan. DNA is bound at residue tyrosine 131. A disulfide bridge links cysteine 177 with cysteine 183. 178–180 (YYM) contributes to the DNA binding site. A glycan (N-linked (GlcNAc...) asparagine) is linked at asparagine 199. Tyrosine 207 contacts DNA. Residues asparagine 209 and asparagine 241 are each glycosylated (N-linked (GlcNAc...) asparagine). 2 disulfide bridges follow: cysteine 254-cysteine 267 and cysteine 257-cysteine 264. Cysteine 257 is lipidated: S-palmitoyl cysteine. Arginine 261 contacts DNA. Cysteine 264 carries S-palmitoyl cysteine lipidation. Asparagine 339 and asparagine 380 each carry an N-linked (GlcNAc...) asparagine glycan. A disulfide bond links cysteine 469 and cysteine 498. 2 N-linked (GlcNAc...) asparagine glycosylation sites follow: asparagine 472 and asparagine 511. N-linked (GlcNAc...) asparagine glycosylation is present at asparagine 565. Residues asparagine 667 and asparagine 692 are each glycosylated (N-linked (GlcNAc...) asparagine). N-linked (GlcNAc...) asparagine glycosylation occurs at asparagine 729. 2 cysteine pairs are disulfide-bonded: cysteine 762–cysteine 788 and cysteine 764–cysteine 807. A helical transmembrane segment spans residues 816-836 (CFGLSLLMVALGLAVPMLHHL). Topologically, residues 837–1029 (CGWDLWYCFH…NFCRGPTTAE (193 aa)) are cytoplasmic. The region spanning 864–1009 (LLYDAVVVFD…SFWANLGIAL (146 aa)) is the TIR domain.

It belongs to the Toll-like receptor family. In terms of assembly, monomer and homodimer. Exists as a monomer in the absence of unmethylated cytidine-phosphate-guanosine (CpG) ligand. Proteolytic processing of an insertion loop (Z-loop) is required for homodimerization upon binding to the unmethylated CpG ligand leading to its activation. Interacts with MYD88 via their respective TIR domains. Interacts with BTK. Interacts (via transmembrane domain) with UNC93B1. Interacts with CD300LH; the interaction may promote full activation of TLR9-triggered innate responses. Interacts with CNPY3 and HSP90B1; this interaction is required for proper folding in the endoplasmic reticulum. Interacts with SMPDL3B. Interacts with CD82; this interaction is essential for TLR9-dependent myddosome formation in response to CpG stimulation. Activated by proteolytic cleavage of the flexible loop between repeats LRR14 and LRR15 within the ectodomain. Cleavage requires UNC93B1. Proteolytically processed by first removing the majority of the ectodomain by either asparagine endopeptidase (AEP) or a cathepsin followed by a trimming event that is solely cathepsin mediated and required for optimal receptor signaling. In terms of processing, palmitoylated by ZDHHC3 in the Golgi regulates TLR9 trafficking from the Golgi to endosomes. Depalmitoylation by PPT1 controls the release of TLR9 from UNC93B1 in endosomes.

The protein localises to the endoplasmic reticulum membrane. It localises to the endosome. Its subcellular location is the lysosome. It is found in the cytoplasmic vesicle. The protein resides in the phagosome. Functionally, key component of innate and adaptive immunity. TLRs (Toll-like receptors) control host immune response against pathogens through recognition of molecular patterns specific to microorganisms. TLR9 is a nucleotide-sensing TLR which is activated by unmethylated cytidine-phosphate-guanosine (CpG) dinucleotides. Acts via MYD88 and TRAF6, leading to NF-kappa-B activation, cytokine secretion and the inflammatory response. Upon CpG stimulation, induces B-cell proliferation, activation, survival and antibody production. The sequence is that of Toll-like receptor 9 (TLR9) from Bos taurus (Bovine).